A 564-amino-acid chain; its full sequence is NAD-dependent malic enzyme (564 aa).

Tyr-104 acts as the Proton donor in catalysis. Arg-157 serves as a coordination point for NAD(+). The active-site Proton acceptor is Lys-175. A divalent metal cation is bound by residues Glu-246, Asp-247, and Asp-270. Residues Asp-270 and Asn-417 each coordinate NAD(+).

Belongs to the malic enzymes family. In terms of assembly, homotetramer. The cofactor is Mg(2+). Mn(2+) is required as a cofactor.

It catalyses the reaction (S)-malate + NAD(+) = pyruvate + CO2 + NADH. The enzyme catalyses oxaloacetate + H(+) = pyruvate + CO2. The protein is NAD-dependent malic enzyme of Aeromonas salmonicida (strain A449).